Here is a 462-residue protein sequence, read N- to C-terminus: Spermatogenesis- and oogenesis-specific basic helix-loop-helix-containing protein 2 (462 aa).

Residues 200–251 (KASFLHSSKEKLRRERIKFCCEQLRTLLPYVKGRKSDVASVIEATVDYVKQV) enclose the bHLH domain. The interval 422–462 (PASSRTASSSIFRGFRESDSGHQASQQPTGPSLQPQDSSYF) is disordered. The span at 442-462 (GHQASQQPTGPSLQPQDSSYF) shows a compositional bias: polar residues.

It is found in the nucleus. Functionally, probable transcription factor, which may be involved in spermatogenesis and oogenesis. The chain is Spermatogenesis- and oogenesis-specific basic helix-loop-helix-containing protein 2 (Sohlh2) from Rattus norvegicus (Rat).